Here is a 498-residue protein sequence, read N- to C-terminus: MNYFPWLTTVVILPIVGGSLIFLFPHKGNKVIKWYTICICLIDLLITSYVFCYHFELDDPLIQLTENYKWINFFDFYWSFGIDGLSLGPILLTGFITTLATLAAQPVTRESKLFYFLMLAMYSGQIGTFSSQDILLFFIMWEFELIPVYLLLSMWGGKKRLYSATKFILYTAGSSVFLLLGILGMSFYSSNEPTLNFESLTNQSYPVALEIIFYIGFLIAFAVKSPIIPLHTWLPDTHGEAHYSTCMLLAGILLKMGAYGLVRINMEFLSRAHSIFSPWLILLGSIQIIYAASTSLGQRNLKKRIAYSSVSHMGFLLLGIGSISDTGLNGAILQIISHGFIGAALFFLAGTSYDRLRLLYLDEMGGMAIPMPKIFTVFTILSMASLALPGMSGFVAELIVLLGIITSQKYLLITKILITFVTAIGMILTPIYSLSMLRQMFYGYKLFNTPNSYFFDSGPRELFISISILIPVISIGIYPDFIFSFSADKVEAILSNFL.

A run of 14 helical transmembrane segments spans residues Phe4–Phe24, Val31–Phe51, Phe76–Ile96, Leu113–Ser130, Ile134–Met154, Phe167–Phe187, Ala208–Ile228, His242–Val262, Ala272–Ala292, Ile305–Asp325, Gly330–Gly350, Leu386–Thr406, Leu411–Ile431, and Phe463–Phe483.

The protein belongs to the complex I subunit 4 family.

It localises to the plastid. The protein resides in the chloroplast thylakoid membrane. The enzyme catalyses a plastoquinone + NADH + (n+1) H(+)(in) = a plastoquinol + NAD(+) + n H(+)(out). The catalysed reaction is a plastoquinone + NADPH + (n+1) H(+)(in) = a plastoquinol + NADP(+) + n H(+)(out). This Glycine max (Soybean) protein is NAD(P)H-quinone oxidoreductase chain 4, chloroplastic.